Reading from the N-terminus, the 748-residue chain is Proton-associated sugar transporter A (748 aa).

The next 6 helical transmembrane spans lie at 93-113 (ILFG…PVLL), 123-143 (SLVW…LGAW), 155-175 (RPFI…LLNG), 191-211 (WGLL…DSAD), 233-253 (IHAL…GIHW), and 268-288 (VIYL…LVSI). A disordered region spans residues 294–339 (RPPSEKRAAMKSPSLPLPPSPPVLPEEGPGDSLPSHTATNFSSPIS). Pro residues predominate over residues 308 to 317 (LPLPPSPPVL). T497 is subject to Phosphothreonine. The next 6 helical transmembrane spans lie at 533-553 (GWLS…EVVF), 573-593 (VTMG…YSAI), 600-620 (FLSV…GTGL), 627-647 (LYVV…LCTL), 685-705 (FLAQ…VGSA), and 708-728 (VMYF…LFVI).

This sequence belongs to the glycoside-pentoside-hexuronide (GPH) cation symporter transporter (TC 2.A.2) family. As to expression, expressed in adult heart, brain, muscle and kidney, with very strong expression in brain. Also expressed in fetal brain, kidney and lung.

Its subcellular location is the membrane. The catalysed reaction is D-galactose(in) + H(+)(in) = D-galactose(out) + H(+)(out). The enzyme catalyses D-glucose(out) + H(+)(out) = D-glucose(in) + H(+)(in). Its function is as follows. Proton-associated glucose transporter in the brain. The sequence is that of Proton-associated sugar transporter A from Homo sapiens (Human).